Reading from the N-terminus, the 438-residue chain is V-type ATP synthase beta chain (438 aa).

Belongs to the ATPase alpha/beta chains family.

Functionally, produces ATP from ADP in the presence of a proton gradient across the membrane. The V-type beta chain is a regulatory subunit. In Chlamydia trachomatis serovar L2b (strain UCH-1/proctitis), this protein is V-type ATP synthase beta chain.